The primary structure comprises 513 residues: Histidine ammonia-lyase (513 aa).

A cross-link (5-imidazolinone (Ala-Gly)) is located at residues 146–148 (ASG). The residue at position 147 (S147) is a 2,3-didehydroalanine (Ser).

It belongs to the PAL/histidase family. Post-translationally, contains an active site 4-methylidene-imidazol-5-one (MIO), which is formed autocatalytically by cyclization and dehydration of residues Ala-Ser-Gly.

It localises to the cytoplasm. The enzyme catalyses L-histidine = trans-urocanate + NH4(+). Its pathway is amino-acid degradation; L-histidine degradation into L-glutamate; N-formimidoyl-L-glutamate from L-histidine: step 1/3. The protein is Histidine ammonia-lyase of Caulobacter vibrioides (strain NA1000 / CB15N) (Caulobacter crescentus).